The primary structure comprises 239 residues: Enolase-phosphatase E1 (239 aa).

The protein belongs to the HAD-like hydrolase superfamily. MasA/MtnC family. Monomer. Mg(2+) is required as a cofactor.

It catalyses the reaction 5-methylsulfanyl-2,3-dioxopentyl phosphate + H2O = 1,2-dihydroxy-5-(methylsulfanyl)pent-1-en-3-one + phosphate. It participates in amino-acid biosynthesis; L-methionine biosynthesis via salvage pathway; L-methionine from S-methyl-5-thio-alpha-D-ribose 1-phosphate: step 3/6. Its pathway is amino-acid biosynthesis; L-methionine biosynthesis via salvage pathway; L-methionine from S-methyl-5-thio-alpha-D-ribose 1-phosphate: step 4/6. In terms of biological role, bifunctional enzyme that catalyzes the enolization of 2,3-diketo-5-methylthiopentyl-1-phosphate (DK-MTP-1-P) into the intermediate 2-hydroxy-3-keto-5-methylthiopentenyl-1-phosphate (HK-MTPenyl-1-P), which is then dephosphorylated to form the acireductone 1,2-dihydroxy-3-keto-5-methylthiopentene (DHK-MTPene). This is Enolase-phosphatase E1 from Streptomyces avermitilis (strain ATCC 31267 / DSM 46492 / JCM 5070 / NBRC 14893 / NCIMB 12804 / NRRL 8165 / MA-4680).